Reading from the N-terminus, the 218-residue chain is Ribulose-phosphate 3-epimerase (218 aa).

Residue Ser10 coordinates substrate. Positions 35, 37, and 68 each coordinate a divalent metal cation. Catalysis depends on Asp37, which acts as the Proton acceptor. Residues His68, 144–147 (GFSG), 177–179 (DGG), and 199–200 (GS) each bind substrate. Asp177 contacts a divalent metal cation. The active-site Proton donor is Asp177.

This sequence belongs to the ribulose-phosphate 3-epimerase family. The cofactor is a divalent metal cation.

The enzyme catalyses D-ribulose 5-phosphate = D-xylulose 5-phosphate. It participates in carbohydrate degradation. Catalyzes the reversible epimerization of D-ribulose 5-phosphate to D-xylulose 5-phosphate. The sequence is that of Ribulose-phosphate 3-epimerase from Treponema pallidum (strain Nichols).